The primary structure comprises 262 residues: Indole-3-glycerol phosphate synthase (262 aa).

Belongs to the TrpC family.

It carries out the reaction 1-(2-carboxyphenylamino)-1-deoxy-D-ribulose 5-phosphate + H(+) = (1S,2R)-1-C-(indol-3-yl)glycerol 3-phosphate + CO2 + H2O. Its pathway is amino-acid biosynthesis; L-tryptophan biosynthesis; L-tryptophan from chorismate: step 4/5. This Staphylococcus epidermidis (strain ATCC 12228 / FDA PCI 1200) protein is Indole-3-glycerol phosphate synthase.